The sequence spans 157 residues: 2-amino-4-hydroxy-6-hydroxymethyldihydropteridine pyrophosphokinase (157 aa).

Belongs to the HPPK family.

It carries out the reaction 6-hydroxymethyl-7,8-dihydropterin + ATP = (7,8-dihydropterin-6-yl)methyl diphosphate + AMP + H(+). It functions in the pathway cofactor biosynthesis; tetrahydrofolate biosynthesis; 2-amino-4-hydroxy-6-hydroxymethyl-7,8-dihydropteridine diphosphate from 7,8-dihydroneopterin triphosphate: step 4/4. Functionally, catalyzes the transfer of pyrophosphate from adenosine triphosphate (ATP) to 6-hydroxymethyl-7,8-dihydropterin, an enzymatic step in folate biosynthesis pathway. This chain is 2-amino-4-hydroxy-6-hydroxymethyldihydropteridine pyrophosphokinase (folK), found in Campylobacter jejuni subsp. jejuni serotype O:2 (strain ATCC 700819 / NCTC 11168).